Here is a 101-residue protein sequence, read N- to C-terminus: Small ribosomal subunit protein uS14 (101 aa).

This sequence belongs to the universal ribosomal protein uS14 family. As to quaternary structure, part of the 30S ribosomal subunit. Contacts proteins S3 and S10.

Functionally, binds 16S rRNA, required for the assembly of 30S particles and may also be responsible for determining the conformation of the 16S rRNA at the A site. This chain is Small ribosomal subunit protein uS14, found in Vibrio vulnificus (strain CMCP6).